Consider the following 343-residue polypeptide: Small ribosomal subunit biogenesis GTPase RsgA (343 aa).

One can recognise a CP-type G domain in the interval 116–275; the sequence is RGQLKPVAAN…LIDSPGIREF (160 aa). Residues 163–166 and 217–225 contribute to the GTP site; these read NKAD and GQSGVGKSS. Zn(2+) contacts are provided by C299, C304, H306, and C312.

It belongs to the TRAFAC class YlqF/YawG GTPase family. RsgA subfamily. As to quaternary structure, monomer. Associates with 30S ribosomal subunit, binds 16S rRNA. The cofactor is Zn(2+).

The protein resides in the cytoplasm. Its function is as follows. One of several proteins that assist in the late maturation steps of the functional core of the 30S ribosomal subunit. Helps release RbfA from mature subunits. May play a role in the assembly of ribosomal proteins into the subunit. Circularly permuted GTPase that catalyzes slow GTP hydrolysis, GTPase activity is stimulated by the 30S ribosomal subunit. This chain is Small ribosomal subunit biogenesis GTPase RsgA, found in Pseudomonas savastanoi pv. phaseolicola (strain 1448A / Race 6) (Pseudomonas syringae pv. phaseolicola (strain 1448A / Race 6)).